Consider the following 76-residue polypeptide: uncharacterized protein (76 aa).

This is an uncharacterized protein from Sulfolobus islandicus rod-shaped virus 1 (SIRV-1).